The primary structure comprises 353 residues: Protein pelota homolog (353 aa).

The protein belongs to the eukaryotic release factor 1 family. Pelota subfamily. In terms of assembly, monomer. A divalent metal cation serves as cofactor.

The protein localises to the cytoplasm. Functionally, may function in recognizing stalled ribosomes, interact with stem-loop structures in stalled mRNA molecules, and effect endonucleolytic cleavage of the mRNA. May play a role in the release non-functional ribosomes and degradation of damaged mRNAs. Has endoribonuclease activity. The sequence is that of Protein pelota homolog from Methanobrevibacter smithii (strain ATCC 35061 / DSM 861 / OCM 144 / PS).